The primary structure comprises 221 residues: Ribonuclease S-2 (221 aa).

A signal peptide spans 1–20 (MIYIFTMVFSLNVLILSSSA). Gln31 contributes to the RNA binding site. A disulfide bridge links Cys37 with Cys44. RNA contacts are provided by residues His55, 91–92 (NV), Phe101, 104–105 (KQ), and 108–109 (KH). The Proton donor role is filled by His55. A disulfide bridge connects residues Cys70 and Cys112. Asn91 carries an N-linked (GlcNAc...) asparagine glycan. Gln105 is a catalytic residue. Catalysis depends on His109, which acts as the Proton acceptor. N-linked (GlcNAc...) asparagine glycans are attached at residues Asn137, Asn153, and Asn195. Cystine bridges form between Cys176/Cys214 and Cys191/Cys202.

It belongs to the RNase T2 family. Post-translationally, N-linked core structure at Asn-91, Asn-137, and Asn-153 contains xylose and at Asn-195 contains xylose and fucose.

It localises to the secreted. The protein resides in the extracellular space. The enzyme catalyses a ribonucleotidyl-ribonucleotide-RNA + H2O = a 3'-end 3'-phospho-ribonucleotide-RNA + a 5'-end dephospho-ribonucleoside-RNA + H(+). In terms of biological role, self-incompatibility (SI) is the inherited ability of a flowering plant to prevent self-fertilization by discriminating between self and non-self pollen during pollination. In many species, self-incompatibility is controlled by the single, multiallelic locus S. This Pyrus pyrifolia (Chinese pear) protein is Ribonuclease S-2.